The chain runs to 118 residues: Holo-[acyl-carrier-protein] synthase (118 aa).

2 residues coordinate Mg(2+): aspartate 5 and glutamate 50.

The protein belongs to the P-Pant transferase superfamily. AcpS family. It depends on Mg(2+) as a cofactor.

It localises to the cytoplasm. The enzyme catalyses apo-[ACP] + CoA = holo-[ACP] + adenosine 3',5'-bisphosphate + H(+). Transfers the 4'-phosphopantetheine moiety from coenzyme A to a Ser of acyl-carrier-protein. This chain is Holo-[acyl-carrier-protein] synthase, found in Aliarcobacter butzleri (strain RM4018) (Arcobacter butzleri).